A 527-amino-acid chain; its full sequence is Nucleobase-ascorbate transporter LPE1 (527 aa).

12 helical membrane passes run 43–63 (LVML…MGGG), 68–88 (AIVI…QVHF), 92–112 (LPAV…IILS), 132–152 (LQGA…FGIW), 163–183 (AAVP…FPGV), 189–209 (VGLP…HLFA), 219–239 (AVLV…AAGA), 284–304 (FAML…LIAV), 361–383 (VIKI…AVLA), 387–409 (LPIF…FSLL), 427–447 (LFLG…FGFG), and 458–478 (VMVN…AYLL).

Belongs to the nucleobase:cation symporter-2 (NCS2) (TC 2.A.40) family. Highly expressed in roots.

Its subcellular location is the membrane. Its activity is regulated as follows. Inhibited by excess of xanthin, uric acid and ascorbic acid, and by 100 um N,N-dicyclohexylcarbodiimide and 30 um carbonyl cyanide m-chlorophenyl-hydrazone. High affinity uric acid-xanthine transporter in A.nidulans. Binds, but cannot transport ascorbic acid. In Zea mays (Maize), this protein is Nucleobase-ascorbate transporter LPE1 (LPE1).